A 258-amino-acid chain; its full sequence is Thymidylate synthase (258 aa).

Arg-21 serves as a coordination point for dUMP. His-51 is a (6R)-5,10-methylene-5,6,7,8-tetrahydrofolate binding site. Position 121 to 122 (121 to 122) interacts with dUMP; the sequence is RR. The active-site Nucleophile is the Cys-141. DUMP is bound by residues 161–164, Asn-172, and 202–204; these read RSAD and HLY. Asp-164 contributes to the (6R)-5,10-methylene-5,6,7,8-tetrahydrofolate binding site. Residue Ala-257 coordinates (6R)-5,10-methylene-5,6,7,8-tetrahydrofolate.

The protein belongs to the thymidylate synthase family. Bacterial-type ThyA subfamily. Homodimer.

The protein localises to the cytoplasm. It catalyses the reaction dUMP + (6R)-5,10-methylene-5,6,7,8-tetrahydrofolate = 7,8-dihydrofolate + dTMP. It participates in pyrimidine metabolism; dTTP biosynthesis. Catalyzes the reductive methylation of 2'-deoxyuridine-5'-monophosphate (dUMP) to 2'-deoxythymidine-5'-monophosphate (dTMP) while utilizing 5,10-methylenetetrahydrofolate (mTHF) as the methyl donor and reductant in the reaction, yielding dihydrofolate (DHF) as a by-product. This enzymatic reaction provides an intracellular de novo source of dTMP, an essential precursor for DNA biosynthesis. In Dichelobacter nodosus (strain VCS1703A), this protein is Thymidylate synthase.